The sequence spans 344 residues: Probable nicotinate-nucleotide adenylyltransferase/Ap4A hydrolase (344 aa).

Residues Met-1–Lys-182 form a naMN adenylyltransferase region. The tract at residues Glu-191 to Asn-344 is ap4A hydrolase. The 112-residue stretch at Arg-193–Met-304 folds into the HD domain. His-196 is a binding site for ADP. Fe cation-binding residues include His-196, His-225, and Asp-226. ADP is bound by residues Asp-226–Lys-229, His-255, His-281–Thr-282, Asp-299, and Arg-305. Asp-299 provides a ligand contact to Fe cation.

The protein in the N-terminal section; belongs to the NadD family. It in the C-terminal section; belongs to the Ap4A hydrolase YqeK family.

It carries out the reaction nicotinate beta-D-ribonucleotide + ATP + H(+) = deamido-NAD(+) + diphosphate. It catalyses the reaction P(1),P(4)-bis(5'-adenosyl) tetraphosphate + H2O = 2 ADP + 2 H(+). It participates in cofactor biosynthesis; NAD(+) biosynthesis; deamido-NAD(+) from nicotinate D-ribonucleotide: step 1/1. Its function is as follows. Catalyzes the reversible adenylation of nicotinate mononucleotide (NaMN) to nicotinic acid adenine dinucleotide (NaAD). Functionally, hydrolyzes diadenosine 5',5'''-P1,P4-tetraphosphate (Ap4A) to yield ADP. This chain is Probable nicotinate-nucleotide adenylyltransferase/Ap4A hydrolase, found in Mycoplasma pneumoniae (strain ATCC 29342 / M129 / Subtype 1) (Mycoplasmoides pneumoniae).